The primary structure comprises 348 residues: N-acetyl-gamma-glutamyl-phosphate reductase (348 aa).

The active site involves C151.

The protein belongs to the NAGSA dehydrogenase family. Type 1 subfamily.

It is found in the cytoplasm. The catalysed reaction is N-acetyl-L-glutamate 5-semialdehyde + phosphate + NADP(+) = N-acetyl-L-glutamyl 5-phosphate + NADPH + H(+). It participates in amino-acid biosynthesis; L-arginine biosynthesis; N(2)-acetyl-L-ornithine from L-glutamate: step 3/4. In terms of biological role, catalyzes the NADPH-dependent reduction of N-acetyl-5-glutamyl phosphate to yield N-acetyl-L-glutamate 5-semialdehyde. This Lachnospira eligens (strain ATCC 27750 / DSM 3376 / VPI C15-48 / C15-B4) (Eubacterium eligens) protein is N-acetyl-gamma-glutamyl-phosphate reductase.